The sequence spans 286 residues: Phycobilisome 32.1 kDa linker polypeptide, phycocyanin-associated, rod (286 aa).

In terms of domain architecture, PBS-linker spans 2–180 (AITTAASRLG…LYRGYANSDR (179 aa)). The 53-residue stretch at 234–286 (DRVYRLEVTGIRSPGYPSVRRSSTVFIVPYERLSDKIQQVHKQGGKIVSVTSA) folds into the CpcD-like domain.

Belongs to the phycobilisome linker protein family. In terms of assembly, associated with the phycobilisome, a hemidiscoidal structure that is composed of two distinct substructures: a core complex and a number of rods radiating from the core.

The protein resides in the cellular thylakoid membrane. In terms of biological role, rod linker protein, associated with phycocyanin. Linker polypeptides determine the state of aggregation and the location of the disk-shaped phycobiliprotein units within the phycobilisome and modulate their spectroscopic properties in order to mediate a directed and optimal energy transfer. This chain is Phycobilisome 32.1 kDa linker polypeptide, phycocyanin-associated, rod (cpcC), found in Nostoc sp. (strain PCC 7120 / SAG 25.82 / UTEX 2576).